The sequence spans 81 residues: A-kinase anchor protein 7 isoform alpha (81 aa).

Gly2 carries the N-myristoyl glycine lipid modification. The interval Gly2–Arg11 is required for membrane localization. S-palmitoyl cysteine attachment occurs at residues Cys5 and Cys6. The interval Leu29–Leu42 is RII-binding. The interval Leu49–Lys81 is disordered. Residues Lys65–Lys81 are compositionally biased toward basic and acidic residues.

As to quaternary structure, binds cAMP-dependent protein kinase (PKA). Interacts with PRKCA; only the cytoplasmic form is capable of interacting with PRKCA.

The protein resides in the lateral cell membrane. Its function is as follows. Targets the cAMP-dependent protein kinase (PKA) to the plasma membrane, and permits functional coupling to the L-type calcium channel. The membrane-associated form reduces epithelial sodium channel (ENaC) activity, whereas the free cytoplasmic form may negatively regulate ENaC channel feedback inhibition by intracellular sodium. This Mus musculus (Mouse) protein is A-kinase anchor protein 7 isoform alpha (Akap7).